Here is a 491-residue protein sequence, read N- to C-terminus: 23S rRNA (uracil(1939)-C(5))-methyltransferase RlmD (491 aa).

Residues 1-10 (MSDPTEHPEI) show a composition bias toward basic and acidic residues. The disordered stretch occupies residues 1–28 (MSDPTEHPEILQDPSSSAPVQGRTDLPP). A TRAM domain is found at 18–81 (APVQGRTDLP…NNWEQASLTA (64 aa)). 4 residues coordinate [4Fe-4S] cluster: Cys-94, Cys-104, Cys-107, and Cys-186. Gln-294, Phe-323, Asn-328, Glu-344, Asn-379, and Asp-400 together coordinate S-adenosyl-L-methionine. Residue Cys-447 is the Nucleophile of the active site.

Belongs to the class I-like SAM-binding methyltransferase superfamily. RNA M5U methyltransferase family. RlmD subfamily.

The catalysed reaction is uridine(1939) in 23S rRNA + S-adenosyl-L-methionine = 5-methyluridine(1939) in 23S rRNA + S-adenosyl-L-homocysteine + H(+). Catalyzes the formation of 5-methyl-uridine at position 1939 (m5U1939) in 23S rRNA. This is 23S rRNA (uracil(1939)-C(5))-methyltransferase RlmD from Paracidovorax citrulli (strain AAC00-1) (Acidovorax citrulli).